Consider the following 881-residue polypeptide: Alanine--tRNA ligase (881 aa).

4 residues coordinate Zn(2+): His-564, His-568, Cys-666, and His-670.

Belongs to the class-II aminoacyl-tRNA synthetase family. It depends on Zn(2+) as a cofactor.

It is found in the cytoplasm. It carries out the reaction tRNA(Ala) + L-alanine + ATP = L-alanyl-tRNA(Ala) + AMP + diphosphate. Its function is as follows. Catalyzes the attachment of alanine to tRNA(Ala) in a two-step reaction: alanine is first activated by ATP to form Ala-AMP and then transferred to the acceptor end of tRNA(Ala). Also edits incorrectly charged Ser-tRNA(Ala) and Gly-tRNA(Ala) via its editing domain. The chain is Alanine--tRNA ligase from Caldicellulosiruptor saccharolyticus (strain ATCC 43494 / DSM 8903 / Tp8T 6331).